The following is a 94-amino-acid chain: Protein S100-A1 (94 aa).

EF-hand domains lie at 13-48 (INVF…FLDV) and 50-85 (KDAD…LTVA). Residues lysine 28, glutamate 33, aspartate 63, asparagine 65, aspartate 67, glutamate 69, and glutamate 74 each coordinate Ca(2+). Cysteine 86 carries the post-translational modification S-nitrosocysteine.

This sequence belongs to the S-100 family. Dimer of either two alpha chains, or two beta chains, or one alpha and one beta chain. Also forms heterodimers with S100P. Interacts with AGER. Interacts with CAPZA1. Interacts with FKBP4. Interacts with RYR1 and RYR2. Interacts with CACYBP in a calcium-dependent manner. Interacts with PPP5C (via TPR repeats); the interaction is calcium-dependent and modulates PPP5C activity. Interacts with ATP2A2 and PLN in a Ca(2+)-dependent manner. Interacts with mitochondrial F1-ATPase subunits ATP5F1A and ATP5F1B; these interactions increase F1-ATPase activity. Glutathionylated; glutathionylation increases affinity to calcium about 10-fold. In terms of tissue distribution, although predominant among the water-soluble brain proteins, S100 is also found in a variety of other tissues.

It is found in the cytoplasm. Its subcellular location is the sarcoplasmic reticulum. The protein localises to the mitochondrion. Functionally, small calcium binding protein that plays important roles in several biological processes such as Ca(2+) homeostasis, chondrocyte biology and cardiomyocyte regulation. In response to an increase in intracellular Ca(2+) levels, binds calcium which triggers conformational changes. These changes allow interactions with specific target proteins and modulate their activity. Regulates a network in cardiomyocytes controlling sarcoplasmic reticulum Ca(2+) cycling and mitochondrial function through interaction with the ryanodine receptors RYR1 and RYR2, sarcoplasmic reticulum Ca(2+)-ATPase/ATP2A2 and mitochondrial F1-ATPase. Facilitates diastolic Ca(2+) dissociation and myofilament mechanics in order to improve relaxation during diastole. The polypeptide is Protein S100-A1 (S100a1) (Rattus norvegicus (Rat)).